A 364-amino-acid chain; its full sequence is MATDEMKSETKKTEHKQKQSTQIKQDLPPPTIPPLPLPYKSCTLKVSIHCEGCKRKVKKILTSIEGVFKVDIDVKQHKVTVIGIISPEILLKKLNKAGKNAEQLPEIPDPVDNKPKPVDPKEKNKKKKKEEKVQITNEATSSGIDNPEKPGSGECDKPESEKPVDEKCLSGDGGETSGPVKEEKKDVLKEKDSGKEESPSPPADSSAPAAEKKAEDTGGAVPDNGKVGKKKKKKGQSLATTNNPTDGPARTQSLPPPTATDYDRPINQINDHHITTTNNPPRHDLYPYPAQGYYAPQVMYGVSYNVAQPPVSVDAASYYTPPPPYSYAYMHNGYQPSDQNPCQPRPSDSFELFSDENPNGCAIM.

Over residues 1-12 the composition is skewed to basic and acidic residues; that stretch reads MATDEMKSETKK. The disordered stretch occupies residues 1-33; the sequence is MATDEMKSETKKTEHKQKQSTQIKQDLPPPTIP. In terms of domain architecture, HMA spans 39–102; sequence YKSCTLKVSI…KLNKAGKNAE (64 aa). Residues cysteine 50 and cysteine 53 each contribute to the a metal cation site. The segment at 101-265 is disordered; the sequence is AEQLPEIPDP…PPTATDYDRP (165 aa). A compositionally biased stretch (basic and acidic residues) spans 111 to 122; it reads VDNKPKPVDPKE. The span at 134–144 shows a compositional bias: polar residues; sequence QITNEATSSGI. Basic and acidic residues-rich tracts occupy residues 154–169 and 180–198; these read ECDK…EKCL and VKEE…KEES. Polar residues predominate over residues 237–253; it reads SLATTNNPTDGPARTQS. At cysteine 361 the chain carries Cysteine methyl ester. Cysteine 361 carries the S-farnesyl cysteine lipid modification. Positions 362–364 are cleaved as a propeptide — removed in mature form; it reads AIM.

This sequence belongs to the HIPP family.

Functionally, heavy-metal-binding protein. In Arabidopsis thaliana (Mouse-ear cress), this protein is Heavy metal-associated isoprenylated plant protein 35.